The sequence spans 103 residues: Insulin (103 aa).

The N-terminal stretch at 1 to 20 (IQSLPLLALLALSGPGTSHA) is a signal peptide. Intrachain disulfides connect Cys27/Cys89, Cys39/Cys102, and Cys88/Cys93. Positions 53–80 (DAEHPLVNGPLHGEVGDLPFQQEEFEKV) are cleaved as a propeptide — c peptide.

It belongs to the insulin family. Heterodimer of a B chain and an A chain linked by two disulfide bonds.

It is found in the secreted. Functionally, insulin decreases blood glucose concentration. It increases cell permeability to monosaccharides, amino acids and fatty acids. It accelerates glycolysis, the pentose phosphate cycle, and glycogen synthesis in liver. This Selasphorus rufus (Rufous hummingbird) protein is Insulin (INS).